We begin with the raw amino-acid sequence, 181 residues long: ATP synthase subunit b, chloroplastic (181 aa).

Residues 27–49 (LATNPINLSVVLGVVIYFGKGVL) traverse the membrane as a helical segment.

This sequence belongs to the ATPase B chain family. As to quaternary structure, F-type ATPases have 2 components, F(1) - the catalytic core - and F(0) - the membrane proton channel. F(1) has five subunits: alpha(3), beta(3), gamma(1), delta(1), epsilon(1). F(0) has four main subunits: a(1), b(1), b'(1) and c(10-14). The alpha and beta chains form an alternating ring which encloses part of the gamma chain. F(1) is attached to F(0) by a central stalk formed by the gamma and epsilon chains, while a peripheral stalk is formed by the delta, b and b' chains.

The protein localises to the plastid. It localises to the chloroplast thylakoid membrane. Functionally, f(1)F(0) ATP synthase produces ATP from ADP in the presence of a proton or sodium gradient. F-type ATPases consist of two structural domains, F(1) containing the extramembraneous catalytic core and F(0) containing the membrane proton channel, linked together by a central stalk and a peripheral stalk. During catalysis, ATP synthesis in the catalytic domain of F(1) is coupled via a rotary mechanism of the central stalk subunits to proton translocation. Its function is as follows. Component of the F(0) channel, it forms part of the peripheral stalk, linking F(1) to F(0). The protein is ATP synthase subunit b, chloroplastic of Lemna minor (Common duckweed).